The following is a 160-amino-acid chain: Endoribonuclease YbeY (160 aa).

Zn(2+) is bound by residues His112, His116, and His122.

This sequence belongs to the endoribonuclease YbeY family. It depends on Zn(2+) as a cofactor.

The protein localises to the cytoplasm. Single strand-specific metallo-endoribonuclease involved in late-stage 70S ribosome quality control and in maturation of the 3' terminus of the 16S rRNA. This Maricaulis maris (strain MCS10) (Caulobacter maris) protein is Endoribonuclease YbeY.